Consider the following 104-residue polypeptide: SOSS complex subunit C (104 aa).

An N-acetylalanine modification is found at Ala2. Ser50 is modified (phosphoserine).

It belongs to the SOSS-C family. In terms of assembly, component of the SOSS complex, composed of SOSS-B (SOSS-B1/NABP2 or SOSS-B2/NABP1), SOSS-A/INTS3 and SOSS-C/INIP. SOSS complexes containing SOSS-B1/NABP2 are more abundant than complexes containing SOSS-B2/NABP1. Interacts with INTS3; the interaction is direct.

The protein localises to the nucleus. Component of the SOSS complex, a multiprotein complex that functions downstream of the MRN complex to promote DNA repair and G2/M checkpoint. The SOSS complex associates with single-stranded DNA at DNA lesions and influences diverse endpoints in the cellular DNA damage response including cell-cycle checkpoint activation, recombinational repair and maintenance of genomic stability. Required for efficient homologous recombination-dependent repair of double-strand breaks (DSBs) and ATM-dependent signaling pathways. This chain is SOSS complex subunit C (Inip), found in Mus musculus (Mouse).